The chain runs to 205 residues: Cytochrome c oxidase subunit 3 (205 aa).

5 helical membrane passes run Thr29 to Val49, Ala72 to Ala92, Trp104 to Ile124, Phe142 to Val162, and Ser184 to Ile204.

In terms of assembly, associates with subunits I, II and IV to form cytochrome c oxidase. The 4 subunit cytochrome c oxidase forms a supercomplex with the menaquinol-cytochrome c reductase complex (cytochrome bc1).

The protein resides in the cell membrane. The enzyme catalyses 4 Fe(II)-[cytochrome c] + O2 + 8 H(+)(in) = 4 Fe(III)-[cytochrome c] + 2 H2O + 4 H(+)(out). The protein is Cytochrome c oxidase subunit 3 (ctaE) of Corynebacterium glutamicum (strain ATCC 13032 / DSM 20300 / JCM 1318 / BCRC 11384 / CCUG 27702 / LMG 3730 / NBRC 12168 / NCIMB 10025 / NRRL B-2784 / 534).